The chain runs to 396 residues: MKSLKTIDVAGKRVLVRVDFNVPLDDQQQITDDTRIQSAVPTIEYLVGAGAKVIVCSHLGRPKGKPDPVFSLAPTARRLGELLDRPVEMANTCVGPDVVSRIARMAPGDVLMLENLRFHPGEANDDDAFARALAALCDVYVDDAFAVSHRANASVDAVTKYAPVCAPGFLMEKELGAFGKALENPARPFVAIVGGAKVSSKLPALQHLLQEVDRLIIGGAMANTFLAAKGVNVGKSKIEQELIGEARSVIRQAAEKKVELFLPVDVIVAEKIDPDADRQAVSVDRIPADAMALDIGPETSRLFGDALKDAKTIVWNGPMGIFEMEAFAAGTKAVAAAVADSKAFTVVGGGDTVSAVHEAGVADRISYISTGGGAFLELMEGKTLPGVAALERNQPA.

Residues 19–21, Arg35, 58–61, Arg117, and Arg150 contribute to the substrate site; these read DFN and HLGR. ATP is bound by residues Lys201, Glu323, and 349–352; that span reads GGDT.

This sequence belongs to the phosphoglycerate kinase family. Monomer.

Its subcellular location is the cytoplasm. The enzyme catalyses (2R)-3-phosphoglycerate + ATP = (2R)-3-phospho-glyceroyl phosphate + ADP. Its pathway is carbohydrate degradation; glycolysis; pyruvate from D-glyceraldehyde 3-phosphate: step 2/5. The chain is Phosphoglycerate kinase from Desulfosudis oleivorans (strain DSM 6200 / JCM 39069 / Hxd3) (Desulfococcus oleovorans).